The primary structure comprises 401 residues: Acetate kinase (401 aa).

N7 contributes to the Mg(2+) binding site. K14 contributes to the ATP binding site. R96 provides a ligand contact to substrate. The Proton donor/acceptor role is filled by D153. Residues 212–216, 287–289, and 335–339 contribute to the ATP site; these read HLGNG, DMR, and GIGEN. E388 provides a ligand contact to Mg(2+).

This sequence belongs to the acetokinase family. As to quaternary structure, homodimer. Mg(2+) is required as a cofactor. Mn(2+) serves as cofactor.

The protein resides in the cytoplasm. It catalyses the reaction acetate + ATP = acetyl phosphate + ADP. The protein operates within metabolic intermediate biosynthesis; acetyl-CoA biosynthesis; acetyl-CoA from acetate: step 1/2. Its function is as follows. Catalyzes the formation of acetyl phosphate from acetate and ATP. Can also catalyze the reverse reaction. This chain is Acetate kinase, found in Microcystis aeruginosa (strain NIES-843 / IAM M-2473).